A 745-amino-acid polypeptide reads, in one-letter code: Bacteriophage N4 adsorption protein B (745 aa).

A run of 3 helical transmembrane segments spans residues 8-28 (FATW…IMFI), 362-382 (ISNF…LLLA), and 393-413 (FLSI…NFGL).

The protein localises to the cell inner membrane. Required for bacteriophage N4 adsorption. May be a component of the phage receptor. In Escherichia coli O157:H7, this protein is Bacteriophage N4 adsorption protein B (nfrB).